The chain runs to 418 residues: RapA guanosine triphosphatase-activating protein B (418 aa).

The 266-residue stretch at 142 to 407 folds into the Rap-GAP domain; the sequence is LVKVCEPEFN…EKASALINVI (266 aa). The tract at residues 304–339 is disordered; that stretch reads NRVVGEQPSPSLTTTTTTTTTTSPTINSNSPTPSNK. Low complexity predominate over residues 311–338; it reads PSPSLTTTTTTTTTTSPTINSNSPTPSN.

Its function is as follows. Mediates the deactivation of rap1 during multicellular development and is required for normal morphogenesis. Also required for the correct patterning of specific subtypes of prestalk cells. The polypeptide is RapA guanosine triphosphatase-activating protein B (rapgapB) (Dictyostelium discoideum (Social amoeba)).